Consider the following 259-residue polypeptide: Cytosolic Fe-S cluster assembly factor Nubp2 homolog (259 aa).

Residue 14–21 coordinates ATP; sequence GKGGVGKS. The [4Fe-4S] cluster site is built by cysteine 188 and cysteine 191.

It belongs to the Mrp/NBP35 ATP-binding proteins family. NUBP2/CFD1 subfamily. Heterotetramer of 2 Nubp1 and 2 Nubp2 chains. [4Fe-4S] cluster is required as a cofactor.

The protein resides in the cytoplasm. Its function is as follows. Component of the cytosolic iron-sulfur (Fe/S) protein assembly (CIA) machinery. Required for maturation of extramitochondrial Fe-S proteins. The Nubp1-Nubp2 heterotetramer forms a Fe-S scaffold complex, mediating the de novo assembly of an Fe-S cluster and its transfer to target apoproteins. This is Cytosolic Fe-S cluster assembly factor Nubp2 homolog from Anopheles gambiae (African malaria mosquito).